The sequence spans 743 residues: Phosphoribosylformylglycinamidine synthase subunit PurL (743 aa).

His50 is an active-site residue. Residues Tyr53 and Lys92 each contribute to the ATP site. Position 94 (Glu94) interacts with Mg(2+). Substrate is bound by residues 95-98 (SHNH) and Arg117. His96 acts as the Proton acceptor in catalysis. Asp118 contributes to the Mg(2+) binding site. Gln241 serves as a coordination point for substrate. Asp269 is a Mg(2+) binding site. 313 to 315 (ESQ) serves as a coordination point for substrate. The ATP site is built by Asp494 and Gly531. A Mg(2+)-binding site is contributed by Asn532. Ser534 contacts substrate.

Belongs to the FGAMS family. As to quaternary structure, monomer. Part of the FGAM synthase complex composed of 1 PurL, 1 PurQ and 2 PurS subunits.

It localises to the cytoplasm. It carries out the reaction N(2)-formyl-N(1)-(5-phospho-beta-D-ribosyl)glycinamide + L-glutamine + ATP + H2O = 2-formamido-N(1)-(5-O-phospho-beta-D-ribosyl)acetamidine + L-glutamate + ADP + phosphate + H(+). Its pathway is purine metabolism; IMP biosynthesis via de novo pathway; 5-amino-1-(5-phospho-D-ribosyl)imidazole from N(2)-formyl-N(1)-(5-phospho-D-ribosyl)glycinamide: step 1/2. Functionally, part of the phosphoribosylformylglycinamidine synthase complex involved in the purines biosynthetic pathway. Catalyzes the ATP-dependent conversion of formylglycinamide ribonucleotide (FGAR) and glutamine to yield formylglycinamidine ribonucleotide (FGAM) and glutamate. The FGAM synthase complex is composed of three subunits. PurQ produces an ammonia molecule by converting glutamine to glutamate. PurL transfers the ammonia molecule to FGAR to form FGAM in an ATP-dependent manner. PurS interacts with PurQ and PurL and is thought to assist in the transfer of the ammonia molecule from PurQ to PurL. This Sinorhizobium fredii (strain HH103) protein is Phosphoribosylformylglycinamidine synthase subunit PurL.